The following is a 527-amino-acid chain: Catalase (527 aa).

The segment covering Met-1–Gln-22 has biased composition (basic and acidic residues). The tract at residues Met-1–Pro-34 is disordered. Ser-2 carries the post-translational modification N-acetylserine. Ser-9 is modified (phosphoserine). An N6-succinyllysine modification is found at Lys-13. Phosphoserine is present on Ser-21. Catalysis depends on residues His-75 and Asn-148. His-194, Ser-201, Arg-203, and Asn-213 together coordinate NADP(+). Lys-221 bears the N6-succinyllysine mark. Lys-233 bears the N6-acetyllysine mark. The NADP(+) site is built by Lys-237, Trp-303, His-305, and Lys-306. An N6-acetyllysine; alternate modification is found at Lys-306. Residue Lys-306 is modified to N6-succinyllysine; alternate. Tyr-358 provides a ligand contact to heme. Ser-417 and Ser-422 each carry phosphoserine. An N6-acetyllysine; alternate modification is found at Lys-430. N6-succinyllysine; alternate is present on Lys-430. Ser-434 bears the Phosphoserine mark. N6-acetyllysine; alternate is present on residues Lys-449 and Lys-480. Lys-449 and Lys-480 each carry N6-succinyllysine; alternate. Position 499 is an N6-acetyllysine (Lys-499). Residue Thr-511 is modified to Phosphothreonine. Ser-517 is subject to Phosphoserine. The residue at position 522 (Lys-522) is an N6-succinyllysine. The short motif at Lys-524 to Leu-527 is the Microbody targeting signal; atypical element.

This sequence belongs to the catalase family. As to quaternary structure, homotetramer. Interacts (via microbody targeting signal) with PEX5, monomeric form interacts with PEX5, leading to its translocation into peroxisomes. Heme is required as a cofactor. The cofactor is NADP(+).

The protein localises to the peroxisome matrix. The enzyme catalyses 2 H2O2 = O2 + 2 H2O. Catalyzes the degradation of hydrogen peroxide (H(2)O(2)) generated by peroxisomal oxidases to water and oxygen, thereby protecting cells from the toxic effects of hydrogen peroxide. Promotes growth of cells including T-cells, B-cells, myeloid leukemia cells, melanoma cells, mastocytoma cells and normal and transformed fibroblast cells. In Mus musculus (Mouse), this protein is Catalase (Cat).